The sequence spans 120 residues: LOB domain-containing protein 8 (120 aa).

The region spanning 8–109 is the LOB domain; it reads RPCCVCITKN…AYLHELEEKI (102 aa).

It belongs to the LOB domain-containing protein family.

This chain is LOB domain-containing protein 8 (LBD8), found in Arabidopsis thaliana (Mouse-ear cress).